A 70-amino-acid chain; its full sequence is ATP synthase subunit c (70 aa).

2 helical membrane passes run 3 to 23 (ALAA…IGIA) and 44 to 64 (LFLI…VIAF).

This sequence belongs to the ATPase C chain family. As to quaternary structure, F-type ATPases have 2 components, F(1) - the catalytic core - and F(0) - the membrane proton channel. F(1) has five subunits: alpha(3), beta(3), gamma(1), delta(1), epsilon(1). F(0) has three main subunits: a(1), b(2) and c(10-14). The alpha and beta chains form an alternating ring which encloses part of the gamma chain. F(1) is attached to F(0) by a central stalk formed by the gamma and epsilon chains, while a peripheral stalk is formed by the delta and b chains.

It is found in the cell membrane. Functionally, f(1)F(0) ATP synthase produces ATP from ADP in the presence of a proton or sodium gradient. F-type ATPases consist of two structural domains, F(1) containing the extramembraneous catalytic core and F(0) containing the membrane proton channel, linked together by a central stalk and a peripheral stalk. During catalysis, ATP synthesis in the catalytic domain of F(1) is coupled via a rotary mechanism of the central stalk subunits to proton translocation. Its function is as follows. Key component of the F(0) channel; it plays a direct role in translocation across the membrane. A homomeric c-ring of between 10-14 subunits forms the central stalk rotor element with the F(1) delta and epsilon subunits. The protein is ATP synthase subunit c of Caldicellulosiruptor bescii (strain ATCC BAA-1888 / DSM 6725 / KCTC 15123 / Z-1320) (Anaerocellum thermophilum).